The primary structure comprises 465 residues: Iron-sulfur cluster assembly SufBD family protein SAR0880 (465 aa).

This sequence belongs to the iron-sulfur cluster assembly SufBD family.

This is Iron-sulfur cluster assembly SufBD family protein SAR0880 from Staphylococcus aureus (strain MRSA252).